We begin with the raw amino-acid sequence, 53 residues long: UPF0391 membrane protein azo1750 (53 aa).

2 helical membrane passes run 6–26 and 30–50; these read VIFL…IAAG and IAKI…VLGM.

This sequence belongs to the UPF0391 family.

The protein resides in the cell membrane. The chain is UPF0391 membrane protein azo1750 from Azoarcus sp. (strain BH72).